We begin with the raw amino-acid sequence, 505 residues long: Lysine--tRNA ligase (505 aa).

Mg(2+)-binding residues include glutamate 409 and glutamate 416.

This sequence belongs to the class-II aminoacyl-tRNA synthetase family. As to quaternary structure, homodimer. Mg(2+) serves as cofactor.

The protein localises to the cytoplasm. The catalysed reaction is tRNA(Lys) + L-lysine + ATP = L-lysyl-tRNA(Lys) + AMP + diphosphate. The sequence is that of Lysine--tRNA ligase from Latilactobacillus sakei subsp. sakei (strain 23K) (Lactobacillus sakei subsp. sakei).